We begin with the raw amino-acid sequence, 413 residues long: Multifunctional CCA protein (413 aa).

Residues Gly8 and Arg11 each coordinate ATP. CTP-binding residues include Gly8 and Arg11. The Mg(2+) site is built by Asp21 and Asp23. ATP-binding residues include Arg91, Arg137, and Arg140. The CTP site is built by Arg91, Arg137, and Arg140. The region spanning 228–329 (TGLHTLMTVT…VKLFDSIDAW (102 aa)) is the HD domain.

It belongs to the tRNA nucleotidyltransferase/poly(A) polymerase family. Bacterial CCA-adding enzyme type 1 subfamily. As to quaternary structure, monomer. Can also form homodimers and oligomers. Requires Mg(2+) as cofactor. Ni(2+) serves as cofactor.

It catalyses the reaction a tRNA precursor + 2 CTP + ATP = a tRNA with a 3' CCA end + 3 diphosphate. It carries out the reaction a tRNA with a 3' CCA end + 2 CTP + ATP = a tRNA with a 3' CCACCA end + 3 diphosphate. Catalyzes the addition and repair of the essential 3'-terminal CCA sequence in tRNAs without using a nucleic acid template. Adds these three nucleotides in the order of C, C, and A to the tRNA nucleotide-73, using CTP and ATP as substrates and producing inorganic pyrophosphate. tRNA 3'-terminal CCA addition is required both for tRNA processing and repair. Also involved in tRNA surveillance by mediating tandem CCA addition to generate a CCACCA at the 3' terminus of unstable tRNAs. While stable tRNAs receive only 3'-terminal CCA, unstable tRNAs are marked with CCACCA and rapidly degraded. The polypeptide is Multifunctional CCA protein (Klebsiella pneumoniae (strain 342)).